A 391-amino-acid chain; its full sequence is Probable sugar efflux transporter (391 aa).

Helical transmembrane passes span 16 to 36 (VFVF…PVAL), 51 to 71 (VGLM…PLML), 82 to 102 (LLFL…AWNF), 110 to 130 (MGIA…VIRV), 138 to 158 (QALG…LPLG), 170 to 190 (TFGV…KLLP), 210 to 230 (PLLV…FTTY), 247 to 267 (ITTL…FLFG), 277 to 297 (FIAF…VFKN), 300 to 320 (WVIF…TIAL), 338 to 358 (IFSG…SIVI), and 361 to 381 (LGLE…LFWL).

Belongs to the major facilitator superfamily. SotB (TC 2.A.1.2) family.

The protein localises to the cell inner membrane. Functionally, involved in the efflux of sugars. The physiological role may be the reduction of the intracellular concentration of toxic sugars or sugar metabolites. The chain is Probable sugar efflux transporter from Helicobacter pylori (strain J99 / ATCC 700824) (Campylobacter pylori J99).